The following is a 580-amino-acid chain: Potassium-transporting ATPase potassium-binding subunit (580 aa).

10 consecutive transmembrane segments (helical) span residues 3–23 (ASGALQPALYLAVLIGLSVPL), 65–85 (DYAFAVLAFNLAGLLVLYALQ), 136–156 (GLGVQNFVSAATGMAVLVALI), 179–199 (LYILLPLSLLLAVLLVSQGVV), 263–283 (LSNFLEMLAILLIPAALCHTF), 293–313 (GWAVLAAMTAIFAVLLVACVA), 399–419 (GLYGMLMFVVIAVFVAGLMVG), 436–456 (MASLVVLFPAITVLVGTAIAV), 504–524 (AIGVAMLVGRYAVIVPVLALA), and 546–566 (LFVGLLTGTVLLVGALTFVPA).

Belongs to the KdpA family. The system is composed of three essential subunits: KdpA, KdpB and KdpC.

Its subcellular location is the cell inner membrane. Part of the high-affinity ATP-driven potassium transport (or Kdp) system, which catalyzes the hydrolysis of ATP coupled with the electrogenic transport of potassium into the cytoplasm. This subunit binds the periplasmic potassium ions and delivers the ions to the membrane domain of KdpB through an intramembrane tunnel. In Sorangium cellulosum (strain So ce56) (Polyangium cellulosum (strain So ce56)), this protein is Potassium-transporting ATPase potassium-binding subunit.